An 810-amino-acid chain; its full sequence is Phospholipase D alpha 1 (810 aa).

The C2 domain maps to 1–126 (MAQHLLHGTL…INGEEVDQWV (126 aa)). Residue Asp-187 coordinates Ca(2+). Residues 327 to 366 (TMFTHHQKIVVVDSEMPSRGGSEMRRIVSFVGGIDLCDGR) enclose the PLD phosphodiesterase 1 domain. Active-site residues include His-332, Lys-334, and Asp-339. His-332 is a binding site for a 1,2-diacyl-sn-glycero-3-phosphate. Residues His-372 and His-406 each contribute to the Ca(2+) site. A 1,2-diacyl-sn-glycero-3-phosphate-binding residues include Gln-522 and His-661. A PLD phosphodiesterase 2 domain is found at 656–683 (FMIYVHTKMMIVDDEYIIIGSANINQRS). Residues His-661, Lys-663, and Asp-668 contribute to the active site. Glu-722 contacts Ca(2+).

Belongs to the phospholipase D family. C2-PLD subfamily. As to quaternary structure, interacts with GPA1. This binding inhibits PLDALPHA1 activity and is relieved by GTP. Ca(2+) is required as a cofactor. Highly expressed in roots, stems and flowers, moderately in leaves, seedlings and siliques. Not detected in seeds.

It is found in the cytoplasm. The protein resides in the cell membrane. The protein localises to the mitochondrion membrane. It localises to the microsome membrane. Its subcellular location is the vacuole. It is found in the cytoplasmic vesicle. The protein resides in the clathrin-coated vesicle. It catalyses the reaction a 1,2-diacyl-sn-glycero-3-phosphocholine + H2O = a 1,2-diacyl-sn-glycero-3-phosphate + choline + H(+). With respect to regulation, not inhibited by neomycin. In terms of biological role, hydrolyzes glycerol-phospholipids at the terminal phosphodiesteric bond to generate phosphatidic acids (PA). Plays an important role in various cellular processes, including phytohormone action and response to stress, characterized by acidification of the cell. Involved in wound induction of jasmonic acid. May be involved in membrane lipid remodeling. Probably involved in freezing tolerance by modulating the cold-responsive genes and accumulation of osmolytes. Can use phosphatidylcholine (PC), phosphatidylethanolamine (PE) and phosphatidylglycerol (PG) as substrates, both in presence or in absence of PIP2. Its main substrate is phosphatidylcholine. Stimulates the intrinsic GTPase activity of GPA1 upon binding. Mediates the abscisic acid effects on stomata through interaction with GPA1 and the production of phosphatidic acid that bind to ABI1. Involved in seed aging and deterioration. Involved in microtubule stabilization and salt tolerance. Involved in abscisic acid-induced stomatal closure. This Arabidopsis thaliana (Mouse-ear cress) protein is Phospholipase D alpha 1.